The sequence spans 130 residues: Blasticidin-S deaminase (130 aa).

A CMP/dCMP-type deaminase domain is found at 1 to 129; that stretch reads MPLSQEESTL…ELLPSGYMNR (129 aa). Serine 28 lines the substrate pocket. Zn(2+) is bound at residue cysteine 54. The Proton donor role is filled by glutamate 56. Arginine 82 is a binding site for substrate. 2 residues coordinate Zn(2+): cysteine 88 and cysteine 91. Tyrosine 126 provides a ligand contact to substrate.

This sequence belongs to the cytidine and deoxycytidylate deaminase family. In terms of assembly, homotetramer. It depends on Zn(2+) as a cofactor.

It catalyses the reaction blasticidin S + H2O + H(+) = deaminohydroxyblasticidin S + NH4(+). Functionally, catalyzes the deamination of the cytosine moiety of the antibiotics blasticidin S, cytomycin and acetylblasticidin S. This Aspergillus terreus (strain NIH 2624 / FGSC A1156) protein is Blasticidin-S deaminase (bsd).